The chain runs to 340 residues: Protein S-acyltransferase 10 (340 aa).

Helical transmembrane passes span Leu-34–Phe-54 and Pro-66–Thr-86. The DHHC domain occupies Leu-162–Cys-212. Cys-192 (S-palmitoyl cysteine intermediate) is an active-site residue. The next 2 membrane-spanning stretches (helical) occupy residues Phe-207–Asp-227 and Ile-241–Ile-261.

It belongs to the DHHC palmitoyltransferase family. As to expression, expressed in mature embryos, embryo sacs, cotyledons, whole seedlings, hydathodes, guard cells, sites of lateral root initiation, root tips and phloem, but not in xylem.

The protein resides in the vacuole membrane. The catalysed reaction is L-cysteinyl-[protein] + hexadecanoyl-CoA = S-hexadecanoyl-L-cysteinyl-[protein] + CoA. S-acyltransferase involved in protein lipid modification. Catalyzes the palmitoylation of proteins peripheral or integral to the tonoplast. Required for the tonoplast localization of CBL2, CBL3 and CBL6, but not for the plasma membrane localization of CBL9, for the endosome localization of RABF1 or for the endomembrane localization of RABF2B. The polypeptide is Protein S-acyltransferase 10 (PAT10) (Arabidopsis thaliana (Mouse-ear cress)).